The sequence spans 303 residues: Mycothiol acetyltransferase (303 aa).

2 consecutive N-acetyltransferase domains span residues Val3–Pro152 and Val155–Ser303. Asp35 contributes to the 1D-myo-inositol 2-(L-cysteinylamino)-2-deoxy-alpha-D-glucopyranoside binding site. Acetyl-CoA is bound at residue Leu79–Val81. 1D-myo-inositol 2-(L-cysteinylamino)-2-deoxy-alpha-D-glucopyranoside contacts are provided by Glu182, Lys224, and Glu237. Acetyl-CoA contacts are provided by residues Val241–Val243 and Gln248–Arg254. Position 275 (Tyr275) interacts with 1D-myo-inositol 2-(L-cysteinylamino)-2-deoxy-alpha-D-glucopyranoside.

It belongs to the acetyltransferase family. MshD subfamily. Monomer.

It carries out the reaction 1D-myo-inositol 2-(L-cysteinylamino)-2-deoxy-alpha-D-glucopyranoside + acetyl-CoA = mycothiol + CoA + H(+). Its function is as follows. Catalyzes the transfer of acetyl from acetyl-CoA to desacetylmycothiol (Cys-GlcN-Ins) to form mycothiol. This is Mycothiol acetyltransferase from Kocuria rhizophila (strain ATCC 9341 / DSM 348 / NBRC 103217 / DC2201).